A 568-amino-acid polypeptide reads, in one-letter code: Glucose-6-phosphate isomerase, cytosolic 1 (568 aa).

Glu360 functions as the Proton donor in the catalytic mechanism. Catalysis depends on residues His391 and Lys516.

The protein belongs to the GPI family. Homodimer.

The protein localises to the cytoplasm. It carries out the reaction alpha-D-glucose 6-phosphate = beta-D-fructose 6-phosphate. It participates in carbohydrate degradation; glycolysis; D-glyceraldehyde 3-phosphate and glycerone phosphate from D-glucose: step 2/4. The polypeptide is Glucose-6-phosphate isomerase, cytosolic 1 (PGIC1) (Clarkia arcuata (Glandular clarkia)).